Reading from the N-terminus, the 1754-residue chain is Collagen alpha-1(XVIII) chain (1754 aa).

The signal sequence occupies residues 1 to 23 (MAPYPCGCHILLLLFCCLAAARA). The interval 42 to 104 (ATTIPEPQGP…TSAESPDAPE (63 aa)) is disordered. Residues 57 to 73 (TADTTTHVTPRNGSTEP) are compositionally biased toward polar residues. 3 N-linked (GlcNAc...) asparagine glycosylation sites follow: Asn68, Asn129, and Asn164. The tract at residues 152 to 256 (LALAGPSSTP…APSQQLQRPD (105 aa)) is disordered. The segment covering 157–169 (PSSTPQENGTTLW) has biased composition (polar residues). Residues 215-253 (SGRASLSSLLGGAPPWGSLQDPDSQGLSPAAAAPSQQLQ) show a composition bias toward low complexity. Residues 329–446 (APAGRCLPLP…TQEDGYCVLI (118 aa)) form the FZ domain. 5 disulfide bridges follow: Cys334-Cys397, Cys344-Cys390, Cys381-Cys419, Cys408-Cys443, and Cys412-Cys432. Residues 456–644 (EVGLLQLLGD…IAELKVRRDP (189 aa)) enclose the Laminin G-like domain. The interval 645 to 751 (QVSPMHCLDE…RTPGGRVKEG (107 aa)) is nonhelical region 1 (NC1). The segment at 645 to 1443 (QVSPMHCLDE…GPPGTMGASS (799 aa)) is disordered. Residues 672-681 (DARELLREET) are compositionally biased toward basic and acidic residues. The residue at position 696 (Thr696) is a Phosphothreonine. Over residues 717–738 (QTTVASLGAQTLPGSDSVSTWD) the composition is skewed to polar residues. Residues 752–785 (GLKGQKGEPGVPGPPGRAGPPGSPCLPGPPGLPC) are triple-helical region 1 (COL1). Residues 762 to 789 (VPGPPGRAGPPGSPCLPGPPGLPCPVSP) show a composition bias toward pro residues. The segment at 786–795 (PVSPLGPAGP) is nonhelical region 2 (NC2). The triple-helical region 2 (COL2) stretch occupies residues 796–875 (ALQTVPGPQG…QGPPGPPGPS (80 aa)). The segment covering 815 to 831 (TPGRDGEPGDPGEDGKP) has biased composition (basic and acidic residues). A compositionally biased stretch (low complexity) spans 833–846 (DTGPQGFPGTPGDV). Positions 862 to 874 (PPGPQGPPGPPGP) are enriched in pro residues. Residues 876–899 (FRHDKLTFIDMEGSGFGGDLEALR) form a nonhelical region 3 (NC3) region. O-linked (Xyl...) (chondroitin sulfate) serine glycosylation occurs at Ser889. The interval 900–1021 (GPRGFPGPPG…PGPPGPPGPG (122 aa)) is triple-helical region 3 (COL3). Positions 904 to 914 (FPGPPGPPGVP) are enriched in pro residues. Asn926 is a glycosylation site (N-linked (GlcNAc...) asparagine). Residues 930–942 (VPGPAGLPGVPGR) show a composition bias toward low complexity. Over residues 946–961 (PGFPGLPGPPGPPGRE) the composition is skewed to pro residues. Positions 976-1003 (AGAPGHKGSKGAPGPAGARGESGLAGAP) are enriched in low complexity. Residues 1005-1021 (PAGPPGPPGPPGPPGPG) show a composition bias toward pro residues. The interval 1022–1044 (LPAGFDDMEGSGGPFWSTARSAD) is nonhelical region 4 (NC4). The segment at 1045–1127 (GPQGPPGLPG…PGPPGPPGPV (83 aa)) is triple-helical region 4 (COL4). Residues 1053–1065 (PGLKGDPGVPGLP) show a composition bias toward low complexity. The span at 1095–1109 (KGDRGSRGEKGDPGK) shows a compositional bias: basic and acidic residues. Positions 1117–1126 (LPGPPGPPGP) are enriched in pro residues. Residues 1128 to 1141 (VYVSEQDGSVLSVP) form a nonhelical region 5 (NC5) region. The segment covering 1141–1153 (PGPEGRPGFAGFP) has biased composition (low complexity). Residues 1142-1183 (GPEGRPGFAGFPGPAGPKGNLGSKGERGSPGPKGEKGEPGSI) are triple-helical region 5 (COL5). Residues 1184–1196 (FSPDGGALGPAQK) form a nonhelical region 6 (NC6) region. Residues 1197-1269 (GAKGEPGFRG…PGPPGPPGTP (73 aa)) are triple-helical region 6 (COL6). Residues 1254–1268 (PGPPGPPGPPGPPGT) are compositionally biased toward pro residues. The tract at residues 1270–1279 (VYDSNVFAES) is nonhelical region 7 (NC7). The segment at 1280-1312 (SRPGPPGLPGNQGPPGPKGAKGEVGPPGPPGQF) is triple-helical region 7 (COL7). Residues 1282–1296 (PGPPGLPGNQGPPGP) show a composition bias toward pro residues. The segment at 1313–1324 (PFDFLQLEAEMK) is nonhelical region 8 (NC8). Basic and acidic residues predominate over residues 1321–1341 (AEMKGEKGDRGDAGQKGERGE). Residues 1325-1346 (GEKGDRGDAGQKGERGEPGGGG) form a triple-helical region 8 (COL8) region. The short motif at 1330–1332 (RGD) is the Cell attachment site element. The tract at residues 1347–1353 (FFGSSLP) is nonhelical region 9 (NC9). Pro residues-rich tracts occupy residues 1353-1365 (PGPPGPPGPPGPR), 1401-1414 (PPGPPGPPGPPSFP), and 1424-1436 (PGPPGPPGPPGPP). A triple-helical region 9 (COL9) region spans residues 1354 to 1411 (GPPGPPGPPGPRGYPGIPGPKGESIRGQPGPPGPQGPPGIGYEGRQGPPGPPGPPGPP). The segment at 1412-1424 (SFPGPHRQTISVP) is nonhelical region 10 (NC10). The segment at 1425–1442 (GPPGPPGPPGPPGTMGAS) is triple-helical region 10 (COL10). The tract at residues 1443–1754 (SGVRLWATRQ…IENSFMTASK (312 aa)) is nonhelical region 11 (NC11). A non-collagenous domain 1 association domain region spans residues 1456–1501 (GQVHEVPEGWLIFVAEQEELYVRVQNGFRKVQLEARTPLPRGTDNE). A non-collagenous domain 1 hinge region region spans residues 1502 to 1571 (VAALQPPVVQ…RPARPTSPPA (70 aa)). The interval 1511-1556 (QLHDSNPYPRREHPHPTARPWRADDILASPPRLPEPQPYPGAPHHS) is disordered. The span at 1519-1535 (PRREHPHPTARPWRADD) shows a compositional bias: basic and acidic residues. Pro residues predominate over residues 1541 to 1551 (PRLPEPQPYPG). O-linked (GalNAc...) threonine glycosylation is present at Thr1567. Residues His1572, His1574, His1582, and Asp1647 each contribute to the Zn(2+) site. Cystine bridges form between Cys1604/Cys1744 and Cys1706/Cys1736.

It belongs to the multiplexin collagen family. In terms of assembly, forms homotrimers. Recombinant non-collagenous domain 1 has stronger affinity to NID1, HSPG2 and laminin-1:NID1 complex and lower affinity to FBLN1 and FBLN2 than endostatin. As to quaternary structure, monomeric. Interacts with KDR/VEGFR2. Interacts with the ITGA5:ITGB1 complex. Interacts with NID1, HSPG2, laminin-1:NID1 complex, FBLN1 and FBLN2. In terms of processing, prolines at the third position of the tripeptide repeating unit (G-X-Y) of the triple-helical regions are hydroxylated. Post-translationally, circulating endostatins are found as sialoglycoprotein and asialoglycoprotein structures. Undergoes proteolytic processing by CTSL/cathepsin-L and elastase-like proteases to generate both non-collagenous domain 1 trimers and endostatin monomers. In tissue extracts (brain, skeletal muscle, heart, kidney, testis and liver) predominantly bands of approximately 38 kDa are detected; recombinant non-collagenous domain 1 shows similar mobility. In vitro, several proteolytic cleavage sites in the non-collagenous domain 1 hinge region generating different endostatin-like peptides are reported. As to expression, detected in placenta (at protein level). Present in multiple organs with highest levels in liver, lung and kidney.

It is found in the secreted. It localises to the extracellular space. The protein localises to the extracellular matrix. The protein resides in the basement membrane. Its function is as follows. Probably plays a major role in determining the retinal structure as well as in the closure of the neural tube. Functionally, may regulate extracellular matrix-dependent motility and morphogenesis of endothelial and non-endothelial cells; the function requires homotrimerization and implicates MAPK signaling. In terms of biological role, potently inhibits endothelial cell proliferation and angiogenesis. May inhibit angiogenesis by binding to the heparan sulfate proteoglycans involved in growth factor signaling. Inhibits VEGFA-induced endothelial cell proliferation and migration. Seems to inhibit VEGFA-mediated signaling by blocking the interaction of VEGFA to its receptor KDR/VEGFR2. Modulates endothelial cell migration in an integrin-dependent manner implicating integrin ITGA5:ITGB1 and to a lesser extent ITGAV:ITGB3 and ITGAV:ITGB5. May negatively regulate the activity of homotrimeric non-collagenous domain 1. This chain is Collagen alpha-1(XVIII) chain, found in Homo sapiens (Human).